A 251-amino-acid polypeptide reads, in one-letter code: MSDEDWQVSRRLFAVLQGGVYSAMLYISSLPEMEQDKCKRSFKKRLSEKETGFIFRLRKAEGIRWSFHTRDYYIGYVREMVAGSSLPDSLRLYVYISNPLWHQSYRPGLTNFNTEWPFVNMWIKTGFMWDDIESQNICKGGEISHGWGPGMVGIVIKAFSCGERKIKITPVMIIRGEIDPTEWCGDCWNLMCLKYSPPNTLQRLAMLACGKEAKEWRGCCNQRFVSPFRTPCDLEVVQNKPKRNLLWTGEL.

Belongs to the feline lentivirus group Vif protein family.

The protein resides in the host cytoplasm. It localises to the virion. Functionally, determines virus infectivity. The chain is Virion infectivity factor (vif) from Feline immunodeficiency virus (isolate TM2) (FIV).